The following is an 880-amino-acid chain: Leucine--tRNA ligase (880 aa).

Residues Pro49 to His59 carry the 'HIGH' region motif. The short motif at Lys638–Ser642 is the 'KMSKS' region element. Position 641 (Lys641) interacts with ATP.

The protein belongs to the class-I aminoacyl-tRNA synthetase family.

Its subcellular location is the cytoplasm. It catalyses the reaction tRNA(Leu) + L-leucine + ATP = L-leucyl-tRNA(Leu) + AMP + diphosphate. This is Leucine--tRNA ligase from Bartonella quintana (strain Toulouse) (Rochalimaea quintana).